The following is a 350-amino-acid chain: Ribosomal RNA large subunit methyltransferase M (350 aa).

Residues 217–220 (APGG), Asp-236, Asp-256, and Asp-272 contribute to the S-adenosyl-L-methionine site. Lys-301 serves as the catalytic Proton acceptor.

It belongs to the class I-like SAM-binding methyltransferase superfamily. RNA methyltransferase RlmE family. RlmM subfamily. As to quaternary structure, monomer.

The protein localises to the cytoplasm. It carries out the reaction cytidine(2498) in 23S rRNA + S-adenosyl-L-methionine = 2'-O-methylcytidine(2498) in 23S rRNA + S-adenosyl-L-homocysteine + H(+). Its function is as follows. Catalyzes the 2'-O-methylation at nucleotide C2498 in 23S rRNA. The chain is Ribosomal RNA large subunit methyltransferase M from Teredinibacter turnerae (strain ATCC 39867 / T7901).